Here is a 296-residue protein sequence, read N- to C-terminus: MLKIGTRGSLLATTQSGHVQEWLQQKGYEAELHIVTTQGDVNMAPVERIGVGVFTQALREAVDRGECEIAVHSFKDLPTAADERFDLVVPQRQDVREALIARDGLTLKELPEGARVGTSAPRRISQLRAMRPDLDIRPLRGNIDTRMGKVTSGELDAVLLAYAGLVRAGYAERATEVFDPEVFMPAPAQGALAIEAVKGTEAAKAIALLADGPATAATRAERTVLSQLEAGCTAPVAATSHWEGEQLVVRGGVFALDGSRQLIAQAQGAASEAEELGRAVSKELFAQGAADVLAAE.

Residue C232 is modified to S-(dipyrrolylmethanemethyl)cysteine.

It belongs to the HMBS family. As to quaternary structure, monomer. Requires dipyrromethane as cofactor.

The enzyme catalyses 4 porphobilinogen + H2O = hydroxymethylbilane + 4 NH4(+). It functions in the pathway porphyrin-containing compound metabolism; protoporphyrin-IX biosynthesis; coproporphyrinogen-III from 5-aminolevulinate: step 2/4. Tetrapolymerization of the monopyrrole PBG into the hydroxymethylbilane pre-uroporphyrinogen in several discrete steps. This is Porphobilinogen deaminase from Corynebacterium aurimucosum (strain ATCC 700975 / DSM 44827 / CIP 107346 / CN-1) (Corynebacterium nigricans).